The chain runs to 96 residues: Large ribosomal subunit protein bL27 (96 aa).

Residues 1-9 (MLKFDIQHF) constitute a propeptide that is removed on maturation. A disordered region spans residues 1–33 (MLKFDIQHFAHKKGGGSTSNGRDSESKRLGAKR). The segment covering 22 to 33 (RDSESKRLGAKR) has biased composition (basic and acidic residues).

The protein belongs to the bacterial ribosomal protein bL27 family. The N-terminus is cleaved by ribosomal processing cysteine protease Prp.

The polypeptide is Large ribosomal subunit protein bL27 (Listeria innocua serovar 6a (strain ATCC BAA-680 / CLIP 11262)).